Reading from the N-terminus, the 185-residue chain is Ribosome-recycling factor (185 aa).

Belongs to the RRF family.

Its subcellular location is the cytoplasm. Its function is as follows. Responsible for the release of ribosomes from messenger RNA at the termination of protein biosynthesis. May increase the efficiency of translation by recycling ribosomes from one round of translation to another. The sequence is that of Ribosome-recycling factor from Listeria monocytogenes serovar 1/2a (strain ATCC BAA-679 / EGD-e).